Consider the following 463-residue polypeptide: Phosphoglycerate transporter protein (463 aa).

Topologically, residues 1–29 (MLTILKTGQSAHKVPPEKVQATYGRYRIQ) are cytoplasmic. Transmembrane regions (helical) follow at residues 30–50 (ALLSVFLGYLAYYIVRNNFTL), 59–79 (LDLSATQIGLLSSCMLIAYGI), 106–126 (IVNVGLGFSSAFWIFAALVVF), 127–147 (NGLFQGMGVGPSFITIANWFP), 160–180 (ISHNVGGGIVAPIVGAAFAIL), 188–208 (ASYIVPACVAVIFALIVLVLG), 267–287 (VFVYMVRFGMISWLPIYLLTV), 297–317 (VAFLFFEWAAIPSTLLAGWLS), 326–346 (MPLAMICMALIFVCLIGYWKS), 349–369 (LLMVTIFAAIVGCLIYVPQFL), 391–411 (GFMSYIFGASLGTSLFGVMVD), and 413–433 (LGWYGGFYLLMGGIVCCILFC).

Belongs to the major facilitator superfamily. Organophosphate:Pi antiporter (OPA) (TC 2.A.1.4) family.

Its subcellular location is the cell inner membrane. In terms of biological role, the phosphoglycerate transporter protein is a part of the PGT transport system. It is the membrane bound transporter for phosphoglycerate into salmonella. This chain is Phosphoglycerate transporter protein (pgtP), found in Salmonella typhimurium (strain LT2 / SGSC1412 / ATCC 700720).